A 232-amino-acid polypeptide reads, in one-letter code: 5'-methylthioadenosine/S-adenosylhomocysteine nucleosidase (232 aa).

The Proton acceptor role is filled by glutamate 12. Substrate-binding positions include glycine 78, methionine 153, and 174–175 (ME). Catalysis depends on aspartate 198, which acts as the Proton donor.

The protein belongs to the PNP/UDP phosphorylase family. MtnN subfamily.

It carries out the reaction S-adenosyl-L-homocysteine + H2O = S-(5-deoxy-D-ribos-5-yl)-L-homocysteine + adenine. It catalyses the reaction S-methyl-5'-thioadenosine + H2O = 5-(methylsulfanyl)-D-ribose + adenine. The catalysed reaction is 5'-deoxyadenosine + H2O = 5-deoxy-D-ribose + adenine. The protein operates within amino-acid biosynthesis; L-methionine biosynthesis via salvage pathway; S-methyl-5-thio-alpha-D-ribose 1-phosphate from S-methyl-5'-thioadenosine (hydrolase route): step 1/2. Functionally, catalyzes the irreversible cleavage of the glycosidic bond in both 5'-methylthioadenosine (MTA) and S-adenosylhomocysteine (SAH/AdoHcy) to adenine and the corresponding thioribose, 5'-methylthioribose and S-ribosylhomocysteine, respectively. Also cleaves 5'-deoxyadenosine, a toxic by-product of radical S-adenosylmethionine (SAM) enzymes, into 5-deoxyribose and adenine. The polypeptide is 5'-methylthioadenosine/S-adenosylhomocysteine nucleosidase (Anoxybacillus flavithermus (strain DSM 21510 / WK1)).